Consider the following 362-residue polypeptide: Acyl-CoA-binding domain-containing protein 3 (362 aa).

The N-terminal stretch at 1 to 22 is a signal peptide; the sequence is MEVFLEMLLTAVVALLFSFLLA. Disordered regions lie at residues 132–151 and 193–214; these read QDEQ…SPEN and VEKS…EKTE. The stretch at 192 to 221 forms a coiled coil; that stretch reads RVEKSSNMVEESDAEAENEEKTELTIEEDD. Residues 231 to 318 form the ACB domain; that stretch reads LEKAFAAAVN…VSKEIPGLTK (88 aa). An acyl-CoA contacts are provided by residues 260–264, Lys286, and Tyr305; that span reads FGLHK. Residues 329–362 form a disordered region; the sequence is METSVGLPPNSGSLEDPTNLVTTGVDESSKNGIP.

The protein belongs to the ACBP family. Expressed in roots, stems, leaves, flowers and siliques.

It localises to the secreted. It is found in the extracellular space. In terms of biological role, binds medium- and long-chain acyl-CoA esters with very high affinity. Can interact in vitro with arachidonyl-CoA, barely with oleoyl-CoA, but not with palmitoyl-CoA. The polypeptide is Acyl-CoA-binding domain-containing protein 3 (ACBP3) (Arabidopsis thaliana (Mouse-ear cress)).